Reading from the N-terminus, the 158-residue chain is MMKHMHIKIKKLHSHAVIPSYQTPQAAGFDLHAVEDSLIKARDRGLVGTGLAFEIESGFEVQVRPRSGLALHNGVSVLNTPGTIDSDYRGEIKVILINHSNEDFHIHRGDRIAQAVVSEVTQAVFTEVQELGQSVRGERGFGSSGVARKGHYQGKPLA.

Substrate-binding positions include 66-68 (RSG), N79, 83-85 (TID), and K93. A disordered region spans residues 139–158 (RGFGSSGVARKGHYQGKPLA).

It belongs to the dUTPase family. Requires Mg(2+) as cofactor.

The catalysed reaction is dUTP + H2O = dUMP + diphosphate + H(+). It functions in the pathway pyrimidine metabolism; dUMP biosynthesis; dUMP from dCTP (dUTP route): step 2/2. Functionally, this enzyme is involved in nucleotide metabolism: it produces dUMP, the immediate precursor of thymidine nucleotides and it decreases the intracellular concentration of dUTP so that uracil cannot be incorporated into DNA. The polypeptide is Deoxyuridine 5'-triphosphate nucleotidohydrolase (Helicobacter hepaticus (strain ATCC 51449 / 3B1)).